A 1484-amino-acid polypeptide reads, in one-letter code: Cystic fibrosis transmembrane conductance regulator (1484 aa).

Over 1-77 (MQRSPLERAN…KLINALRRCF (77 aa)) the chain is Cytoplasmic. A helical transmembrane segment spans residues 78–98 (FWRFMFYGLLLYLGEVTKAVQ). The region spanning 81–365 (FMFYGLLLYL…WAVQMWYDSI (285 aa)) is the ABC transmembrane type-1 1 domain. Topologically, residues 99 to 122 (PLLLGRIIASYDPDNAHERSIAYY) are extracellular. The helical transmembrane segment at 123-146 (LGIGLCLLFIVRTLLLHPAVFGLH) threads the bilayer. Over 147 to 195 (HIGMQMRIALFSLIYKKTLKLSSRVLDKISTGQLVSLLSNNLNKFDEGL) the chain is Cytoplasmic. The helical transmembrane segment at 196–216 (ALAHFVWIAPLQVMLLMGLLW) threads the bilayer. Over 217-222 (DLLQAS) the chain is Extracellular. Residues 223-243 (AFCGLAVLVVLVLFQAWLGHR) form a helical membrane-spanning segment. The Cytoplasmic segment spans residues 244 to 298 (MMKYRDRRAGKINERLVITAEIIENIQSVKAYCWEEAMENMIESLRETELKLTRK). The chain crosses the membrane as a helical span at residues 299 to 319 (AAYMRYFNSSAFFFSGFFVVF). Residues 320-339 (LSVLPSMLTKGIVLRKIFTT) are Extracellular-facing. The helical transmembrane segment at 340-358 (ISFCIVLRMAVTRQFPWAV) threads the bilayer. Topologically, residues 359-859 (QMWYDSIGAI…YLRYMTIHKK (501 aa)) are cytoplasmic. ATP contacts are provided by residues Trp401, Ser434, 458–465 (GSTGAGKT), and Gln493. Residues 423 to 646 (SDDKNLIFSN…RPDFSSKLMG (224 aa)) enclose the ABC transporter 1 domain. Cys524 carries the S-palmitoyl cysteine lipid modification. A phosphoserine mark is found at Ser549 and Ser660. Residues 654 to 832 (SAERRNSILT…EEINEEDLKE (179 aa)) form a disordered R region region. Phosphoserine; by PKA is present on Ser670. A Phosphoserine modification is found at Ser686. A Glycyl lysine isopeptide (Lys-Gly) (interchain with G-Cter in ubiquitin) cross-link involves residue Lys688. Residues Ser700, Ser712, Ser737, Ser768, Ser791, Ser796, and Ser814 each carry the phosphoserine modification. The helical transmembrane segment at 860 to 880 (LIFVLMMCLVIFLIEVAASLV) threads the bilayer. In terms of domain architecture, ABC transmembrane type-1 2 spans 860–1159 (LIFVLMMCLV…AVNASIDVDS (300 aa)). Over 881-922 (GLCLFKDGASRMNSTSNLNHTSTLDWFAVIVTNTSTYYMFYI) the chain is Extracellular. 3 N-linked (GlcNAc...) asparagine glycosylation sites follow: Asn893, Asn899, and Asn913. The chain crosses the membrane as a discontinuously helical span at residues 923 to 943 (YVGVADTLLALGFLRGLPLVH). Residues 944-994 (SLISVSKILHQKMLHSVLQAPMSTFNTLKTGSILNRFSKDMAILDDLLPLT) lie on the Cytoplasmic side of the membrane. Residues 995-1015 (IFDFIQLLLIVIGAVTVVSAL) traverse the membrane as a helical segment. At 1016-1017 (QP) the chain is on the extracellular side. The chain crosses the membrane as a helical span at residues 1018 to 1038 (YIFLASVPVVIAFVLLRAYFL). Residues 1039-1099 (RTSQQLKQLE…TANWFLYLST (61 aa)) lie on the Cytoplasmic side of the membrane. A helical transmembrane segment spans residues 1100-1120 (LRWFQMRIEMVFVIFFILVTF). The Extracellular portion of the chain corresponds to 1121–1134 (ISILTTGDGEGKVG). Residues 1135–1155 (IVLTLAMNIMGTLQWAVNASI) traverse the membrane as a helical segment. The Cytoplasmic segment spans residues 1156–1484 (DVDSLMRSVS…TEEEVQDTRL (329 aa)). The region spanning 1212-1445 (MTVQDLTAKY…KSVFKQAISH (234 aa)) is the ABC transporter 2 domain. Residues Tyr1221 and 1246-1253 (GRTGSGKS) contribute to the ATP site. The interval 1388–1484 (KTLKQAFTNC…TEEEVQDTRL (97 aa)) is interaction with GORASP2. Cys1397 carries the S-palmitoyl cysteine lipid modification. Residues Ser1446 and Ser1460 each carry the phosphoserine modification. Residues 1463–1484 (LSRPKITALQEETEEEVQDTRL) are disordered. The span at 1473–1484 (EETEEEVQDTRL) shows a compositional bias: acidic residues. The PDZ-binding motif lies at 1482 to 1484 (TRL).

This sequence belongs to the ABC transporter superfamily. ABCC family. CFTR transporter (TC 3.A.1.202) subfamily. In terms of assembly, monomer; does not require oligomerization for channel activity. May form oligomers in the membrane. Interacts with SLC26A3, SLC26A6 and NHERF1. Interacts with SHANK2. Interacts with MYO6. Interacts (via C-terminus) with GOPC (via PDZ domain); this promotes CFTR internalization and thereby decreases channel activity. Interacts with SLC4A7 through NHERF1. Found in a complex with MYO5B and RAB11A. Interacts with ANO1. Interacts with SLC26A8. Interacts with AHCYL1; the interaction increases CFTR activity. Interacts with CSE1L. The core-glycosylated form interacts with GORASP2 (via PDZ GRASP-type 1 domain) in respone to ER stress. Interacts with MARCHF2; the interaction leads to CFTR ubiqtuitination and degradation. Interacts with ADGRG2. N-glycosylated. In terms of processing, phosphorylated; cAMP treatment promotes phosphorylation and activates the channel. Dephosphorylation decreases the ATPase activity (in vitro). Phosphorylation at PKA sites activates the channel. Phosphorylation at PKC sites enhances the response to phosphorylation by PKA. Phosphorylated by AMPK; this inhibits channel activity. Post-translationally, ubiquitinated, leading to its degradation in the lysosome. Deubiquitination by USP10 in early endosomes enhances its endocytic recycling to the cell membrane. Ubiquitinated by RNF185 during ER stress. Ubiquitinated by MARCHF2.

It is found in the apical cell membrane. The protein localises to the early endosome membrane. It localises to the cell membrane. Its subcellular location is the recycling endosome membrane. The protein resides in the endoplasmic reticulum membrane. It is found in the nucleus. It carries out the reaction ATP + H2O + closed Cl(-) channel = ADP + phosphate + open Cl(-) channel.. It catalyses the reaction chloride(in) = chloride(out). The catalysed reaction is hydrogencarbonate(in) = hydrogencarbonate(out). The enzyme catalyses ATP + H2O = ADP + phosphate + H(+). Epithelial ion channel that plays an important role in the regulation of epithelial ion and water transport and fluid homeostasis. Mediates the transport of chloride ions across the cell membrane. Possesses an intrinsic ATPase activity and utilizes ATP to gate its channel; the passive flow of anions through the channel is gated by cycles of ATP binding and hydrolysis by the ATP-binding domains. The ion channel is also permeable to HCO(3)(-); selectivity depends on the extracellular chloride concentration. Exerts its function also by modulating the activity of other ion channels and transporters. Contributes to the regulation of the pH and the ion content of the epithelial fluid layer. Modulates the activity of the epithelial sodium channel (ENaC) complex, in part by regulating the cell surface expression of the ENaC complex. May regulate bicarbonate secretion and salvage in epithelial cells by regulating the transporter SLC4A7. Can inhibit the chloride channel activity of ANO1. Plays a role in the chloride and bicarbonate homeostasis during sperm epididymal maturation and capacitation. The sequence is that of Cystic fibrosis transmembrane conductance regulator from Ornithorhynchus anatinus (Duckbill platypus).